A 348-amino-acid polypeptide reads, in one-letter code: Rhodopsin (348 aa).

N-acetylmethionine is present on methionine 1. Residues 1–36 lie on the Extracellular side of the membrane; that stretch reads MNGTEGPNFYVPFSNKTGVVRSPFEFPQYYLAEPWQ. Asparagine 2 and asparagine 15 each carry an N-linked (GlcNAc...) asparagine glycan. A helical membrane pass occupies residues 37–61; that stretch reads FSMLAAYMFLLIVLGFPINFLTLYV. Topologically, residues 62–73 are cytoplasmic; the sequence is TVQHKKLRTPLN. A helical transmembrane segment spans residues 74-96; that stretch reads YILLNLAVADLFMVFGGFTTTLY. The Extracellular segment spans residues 97 to 110; the sequence is TSLHGYFVFGPTGC. An intrachain disulfide couples cysteine 110 to cysteine 187. The helical transmembrane segment at 111–133 threads the bilayer; that stretch reads NLEGFFATLGGEIALWSLVVLAI. Residues 134–136 carry the 'Ionic lock' involved in activated form stabilization motif; that stretch reads ERY. The Cytoplasmic segment spans residues 134–152; the sequence is ERYVVVCKPMSNFRFGENH. The helical transmembrane segment at 153–173 threads the bilayer; the sequence is AIMGVGFTWVMALACAAPPLV. Residues 174-202 are Extracellular-facing; it reads GWSRYIPEGMQCSCGIDYYTLKPEVNNES. Glutamate 201 is a binding site for Zn(2+). A helical transmembrane segment spans residues 203-224; that stretch reads FVIYMFVVHFTIPMIVIFFCYG. At 225-252 the chain is on the cytoplasmic side; it reads QLVFTVKEAAAQQQESATTQKAEKEVTR. Residues 253 to 274 traverse the membrane as a helical segment; that stretch reads MVIIMVIAFLICWVPYASVAFY. The Extracellular portion of the chain corresponds to 275–286; that stretch reads IFTHQGSNFGPI. Glutamine 279 provides a ligand contact to Zn(2+). Residues 287-308 form a helical membrane-spanning segment; sequence FMTLPAFFAKAASIYNPVIYIM. An N6-(retinylidene)lysine modification is found at lysine 296. At 309–348 the chain is on the cytoplasmic side; that stretch reads MNKQFRTCMITTLCCGKNPLGDDEVSASASKTETSQVAPA. 2 S-palmitoyl cysteine lipidation sites follow: cysteine 322 and cysteine 323. Residues 330-348 form an interaction with SAG region; the sequence is DDEVSASASKTETSQVAPA. A phosphoserine mark is found at serine 334 and serine 338. Phosphothreonine is present on residues threonine 340 and threonine 342. Serine 343 carries the post-translational modification Phosphoserine.

The protein belongs to the G-protein coupled receptor 1 family. Opsin subfamily. As to quaternary structure, homodimer. May form a complex composed of RHO, GRK1 and RCVRN in a Ca(2+)-dependent manner; RCVRN prevents the interaction between GRK1 and RHO. Interacts with GRK1. Interacts (phosphorylated form) with SAG. Interacts with GNAT1. Interacts with GNAT3. SAG and G-proteins compete for a common binding site. Interacts with PRCD; the interaction promotes PRCD stability. Forms a complex with ASAP1 and ARF4. Forms a complex with ASAP1, RAB11A, Rabin8/RAB3IP, ARF4 and RAB11FIP3; the complex regulates Golgi-to-cilia rhodopsin/RHO transport in photoreceptors. Phosphorylated on some or all of the serine and threonine residues present in the C-terminal region. Post-translationally, contains one covalently linked retinal chromophore. Upon light absorption, the covalently bound 11-cis-retinal is converted to all-trans-retinal. After hydrolysis of the Schiff base and release of the covalently bound all-trans-retinal, active rhodopsin is regenerated by binding of a fresh molecule of 11-cis-retinal.

It localises to the membrane. It is found in the cell projection. Its subcellular location is the cilium. The protein resides in the photoreceptor outer segment. Functionally, photoreceptor required for image-forming vision at low light intensity. Required for photoreceptor cell viability after birth. Light-induced isomerization of 11-cis to all-trans retinal triggers a conformational change that activates signaling via G-proteins. Subsequent receptor phosphorylation mediates displacement of the bound G-protein alpha subunit by the arrestin SAG and terminates signaling. This Phoca vitulina (Harbor seal) protein is Rhodopsin (RHO).